The chain runs to 361 residues: Ribosomal RNA large subunit methyltransferase M (361 aa).

Residues Ser187, 220-223 (CPGG), Asp239, Asp259, and Asp276 each bind S-adenosyl-L-methionine. The active-site Proton acceptor is the Lys305.

Belongs to the class I-like SAM-binding methyltransferase superfamily. RNA methyltransferase RlmE family. RlmM subfamily. Monomer.

The protein resides in the cytoplasm. The catalysed reaction is cytidine(2498) in 23S rRNA + S-adenosyl-L-methionine = 2'-O-methylcytidine(2498) in 23S rRNA + S-adenosyl-L-homocysteine + H(+). Catalyzes the 2'-O-methylation at nucleotide C2498 in 23S rRNA. This Shewanella sp. (strain ANA-3) protein is Ribosomal RNA large subunit methyltransferase M.